Reading from the N-terminus, the 1357-residue chain is DNA-directed RNA polymerase subunit beta (1357 aa).

It belongs to the RNA polymerase beta chain family. The RNAP catalytic core consists of 2 alpha, 1 beta, 1 beta' and 1 omega subunit. When a sigma factor is associated with the core the holoenzyme is formed, which can initiate transcription.

It catalyses the reaction RNA(n) + a ribonucleoside 5'-triphosphate = RNA(n+1) + diphosphate. Functionally, DNA-dependent RNA polymerase catalyzes the transcription of DNA into RNA using the four ribonucleoside triphosphates as substrates. The chain is DNA-directed RNA polymerase subunit beta from Pseudomonas fluorescens (strain SBW25).